A 251-amino-acid polypeptide reads, in one-letter code: Putative glutamine amidotransferase YLR126C (251 aa).

Positions 48-232 (EVFHVQKNVF…NRYERQCQEL (185 aa)) constitute a Glutamine amidotransferase type-1 domain. Catalysis depends on for GATase activity residues Cys112, His198, and Glu200.

The protein localises to the cytoplasm. May have a role in copper and iron homeostasis. The protein is Putative glutamine amidotransferase YLR126C of Saccharomyces cerevisiae (strain ATCC 204508 / S288c) (Baker's yeast).